Consider the following 227-residue polypeptide: PKHD-type hydroxylase Mfla_2317 (227 aa).

Positions 78 to 178 (KVFPPLFNRY…RVSSFFWMQS (101 aa)) constitute a Fe2OG dioxygenase domain. Residues H96, D98, and H159 each coordinate Fe cation. R169 contacts 2-oxoglutarate.

Requires Fe(2+) as cofactor. The cofactor is L-ascorbate.

This chain is PKHD-type hydroxylase Mfla_2317, found in Methylobacillus flagellatus (strain ATCC 51484 / DSM 6875 / VKM B-1610 / KT).